The sequence spans 190 residues: NADH-quinone oxidoreductase subunit B (190 aa).

[4Fe-4S] cluster contacts are provided by C39, C40, C104, and C135.

Belongs to the complex I 20 kDa subunit family. NDH-1 is composed of 14 different subunits. Subunits NuoB, C, D, E, F, and G constitute the peripheral sector of the complex. [4Fe-4S] cluster is required as a cofactor.

It localises to the cell inner membrane. The enzyme catalyses a quinone + NADH + 5 H(+)(in) = a quinol + NAD(+) + 4 H(+)(out). Its function is as follows. NDH-1 shuttles electrons from NADH, via FMN and iron-sulfur (Fe-S) centers, to quinones in the respiratory chain. The immediate electron acceptor for the enzyme in this species is believed to be a menaquinone. Couples the redox reaction to proton translocation (for every two electrons transferred, four hydrogen ions are translocated across the cytoplasmic membrane), and thus conserves the redox energy in a proton gradient. The polypeptide is NADH-quinone oxidoreductase subunit B (Chlorobium chlorochromatii (strain CaD3)).